Consider the following 341-residue polypeptide: MSTTADKIAVLGAGSWGTALASLLARHGHPTVLWGRDAAMVEAIDQRHENPRYLPGIPLPDSLRATTDLASAVEGAAWILVVTPSHAFGETVRALAPLRPAGAGVAWATKGFEPGSGRFLHEVAREVLGEDVPLAVVTGPSFAKEVTQGLPTAITVHGDVPEFAQTVAEAMHGPAFRAYTGDDMVGAELGGAMKNVLAVATGVADGMQLGLNARAGLITRGLNEMLRLAAAIGAKPETLMGLAGLGDLVLTCTGDLSRNRRLGLALGRGQTLQDAVREIGQVVESVQTADEVMRQARRHGIDLPISDRVRAVLHGEQTPEEGLRALLAREQKPEYPDTLFK.

4 residues coordinate NADPH: Ser-15, Trp-16, Arg-36, and Lys-110. Sn-glycerol 3-phosphate contacts are provided by Lys-110, Gly-139, and Ser-141. Ala-143 serves as a coordination point for NADPH. Sn-glycerol 3-phosphate contacts are provided by Lys-194, Asp-247, Ser-257, Arg-258, and Asn-259. Residue Lys-194 is the Proton acceptor of the active site. Arg-258 contacts NADPH. Val-282 and Glu-284 together coordinate NADPH.

This sequence belongs to the NAD-dependent glycerol-3-phosphate dehydrogenase family.

The protein resides in the cytoplasm. The catalysed reaction is sn-glycerol 3-phosphate + NAD(+) = dihydroxyacetone phosphate + NADH + H(+). It carries out the reaction sn-glycerol 3-phosphate + NADP(+) = dihydroxyacetone phosphate + NADPH + H(+). Its pathway is membrane lipid metabolism; glycerophospholipid metabolism. In terms of biological role, catalyzes the reduction of the glycolytic intermediate dihydroxyacetone phosphate (DHAP) to sn-glycerol 3-phosphate (G3P), the key precursor for phospholipid synthesis. The sequence is that of Glycerol-3-phosphate dehydrogenase [NAD(P)+] from Stenotrophomonas maltophilia (strain R551-3).